Here is a 264-residue protein sequence, read N- to C-terminus: V-type proton ATPase subunit D (264 aa).

The span at 214–230 (RDNAETDAQMKAKKAEQ) shows a compositional bias: basic and acidic residues. The interval 214–264 (RDNAETDAQMKAKKAEQQRLALADSENAEGEQTENTPADILAAEEDEDVIF) is disordered. Acidic residues predominate over residues 255-264 (AAEEDEDVIF).

The protein belongs to the V-ATPase D subunit family. As to quaternary structure, V-ATPase is a heteromultimeric enzyme composed of a peripheral catalytic V1 complex (components A to H) attached to an integral membrane V0 proton pore complex (components: a, c, c', c'', d, e, f and VOA1).

The protein resides in the vacuole membrane. Functionally, subunit of the V1 complex of vacuolar(H+)-ATPase (V-ATPase), a multisubunit enzyme composed of a peripheral complex (V1) that hydrolyzes ATP and a membrane integral complex (V0) that translocates protons. V-ATPase is responsible for acidifying and maintaining the pH of intracellular compartments. The polypeptide is V-type proton ATPase subunit D (vma-8) (Neurospora crassa (strain ATCC 24698 / 74-OR23-1A / CBS 708.71 / DSM 1257 / FGSC 987)).